The chain runs to 311 residues: Pyrimidine-specific ribonucleoside hydrolase RihA (311 aa).

His240 is an active-site residue.

The protein belongs to the IUNH family. RihA subfamily.

In terms of biological role, hydrolyzes with equal efficiency cytidine or uridine to ribose and cytosine or uracil, respectively. The polypeptide is Pyrimidine-specific ribonucleoside hydrolase RihA (Escherichia coli (strain K12 / MC4100 / BW2952)).